We begin with the raw amino-acid sequence, 412 residues long: Class E basic helix-loop-helix protein 40 (412 aa).

The tract at residues 1-21 is disordered; that stretch reads MERIPSAQPPPTCLPKAPGLE. Residues 1–139 are essential for interaction with BMAL1, E-box binding and repressor activity against the CLOCK-BMAL1 heterodimer; sequence MERIPSAQPP…LSGRNVEAGQ (139 aa). Residues 52–107 form the bHLH domain; it reads TYKLPHRLIEKKRRDRINECIAQLKDLLPEHLKLTTLGHLEKAVVLELTLKHVKAL. Residues 75 to 79 are necessary for interaction with RXRA and repressor activity against RXRA; the sequence is LKDLL. An Orange domain is found at 142–175; that stretch reads FCSGFQTCAREVLQYLAKHENTRDLKSSQLVTHL. A Glycyl lysine isopeptide (Lys-Gly) (interchain with G-Cter in SUMO1, SUMO2 and SUMO3) cross-link involves residue lysine 159. Lysine 167 participates in a covalent cross-link: Glycyl lysine isopeptide (Lys-Gly) (interchain with G-Cter in SUMO2). Disordered regions lie at residues 182 to 256 and 279 to 298; these read LLQG…ELRV and KQESEEPPMKKSRMQLSDDE. Serine 235 carries the post-translational modification Phosphoserine. Residue lysine 279 forms a Glycyl lysine isopeptide (Lys-Gly) (interchain with G-Cter in SUMO1); alternate linkage. Lysine 279 participates in a covalent cross-link: Glycyl lysine isopeptide (Lys-Gly) (interchain with G-Cter in SUMO1, SUMO2 and SUMO3); alternate. Residue lysine 279 forms a Glycyl lysine isopeptide (Lys-Gly) (interchain with G-Cter in SUMO2); alternate linkage. Lysine 288 is covalently cross-linked (Glycyl lysine isopeptide (Lys-Gly) (interchain with G-Cter in SUMO2)). Phosphoserine is present on serine 383.

Homodimer. Heterodimer with BHLHE41/DEC2. Interacts with TCF3/E47. Interacts with ubiquitin-conjugating enzyme UBE2I/UBC9. Interacts with HDAC1, SUMO1, RXRA and BMAL1. Post-translationally, ubiquitinated; which may lead to proteasomal degradation. In terms of processing, sumoylation inhibits its ubiquitination and promotes its negative regulation of the CLOCK-BMAL1 heterodimer transcriptional activator activity.

It localises to the cytoplasm. Its subcellular location is the nucleus. In terms of biological role, transcriptional repressor involved in the regulation of the circadian rhythm by negatively regulating the activity of the clock genes and clock-controlled genes. Acts as the negative limb of a novel autoregulatory feedback loop (DEC loop) which differs from the one formed by the PER and CRY transcriptional repressors (PER/CRY loop). Both these loops are interlocked as it represses the expression of PER1/2 and in turn is repressed by PER1/2 and CRY1/2. Represses the activity of the circadian transcriptional activator: CLOCK-BMAL1|BMAL2 heterodimer by competing for the binding to E-box elements (5'-CACGTG-3') found within the promoters of its target genes. Negatively regulates its own expression and the expression of DBP and BHLHE41/DEC2. Acts as a corepressor of RXR and the RXR-LXR heterodimers and represses the ligand-induced RXRA and NR1H3/LXRA transactivation activity. May be involved in the regulation of chondrocyte differentiation via the cAMP pathway. Represses the transcription of NR0B2 and attentuates the transactivation of NR0B2 by the CLOCK-BMAL1 complex. Drives the circadian rhythm of blood pressure through transcriptional repression of ATP1B1 in the cardiovascular system. The sequence is that of Class E basic helix-loop-helix protein 40 (BHLHE40) from Bos taurus (Bovine).